The sequence spans 775 residues: DNA polymerase (775 aa).

This sequence belongs to the DNA polymerase type-B family. Monomer.

It catalyses the reaction DNA(n) + a 2'-deoxyribonucleoside 5'-triphosphate = DNA(n+1) + diphosphate. With respect to regulation, an 11-mer corresponding to the PIP-box of RfcL inhibits DNA synthesis. Functionally, in addition to polymerase activity, this DNA polymerase exhibits 3' to 5' exonuclease activity. This Pyrococcus furiosus (strain ATCC 43587 / DSM 3638 / JCM 8422 / Vc1) protein is DNA polymerase (pol).